Reading from the N-terminus, the 73-residue chain is Putative sodium channel toxin Ts39 (73 aa).

The N-terminal stretch at 1-22 (MKTLNFCLFLVIISSLTVRVFC) is a signal peptide. The region spanning 24–73 (NDRFLTVNDNYVICLYINKSFVNCENLCKAYMNAKDGFCRQPHCFCTDVE) is the LCN-type CS-alpha/beta domain. Intrachain disulfides connect Cys37-Cys62, Cys47-Cys67, and Cys51-Cys69.

This sequence belongs to the long (3 C-C) scorpion toxin superfamily. Sodium channel inhibitor family. As to expression, expressed by the venom gland.

The protein localises to the secreted. Functionally, putative sodium channel toxin. The protein is Putative sodium channel toxin Ts39 of Tityus serrulatus (Brazilian scorpion).